The chain runs to 395 residues: Putative pyridoxal phosphate-dependent acyltransferase (395 aa).

110-111 is a pyridoxal 5'-phosphate binding site; sequence GF. Histidine 135 contacts substrate. Residues serine 185, 210–213, and 240–243 contribute to the pyridoxal 5'-phosphate site; these read DDAH and TLSK. Lysine 243 carries the N6-(pyridoxal phosphate)lysine modification. Residue threonine 357 coordinates substrate.

Belongs to the class-II pyridoxal-phosphate-dependent aminotransferase family. Homodimer. The cofactor is pyridoxal 5'-phosphate.

In Staphylococcus aureus (strain MRSA252), this protein is Putative pyridoxal phosphate-dependent acyltransferase.